Here is a 272-residue protein sequence, read N- to C-terminus: MNRIALGLHYDGAAFSGWQSQPHRNTVQDHLENAIERFAGVRLLTTVAGRTDTGVHALGQVIHLDTALEREPFSWVRGVNAFLPPSIALQWALPVDQGFHARFLAFERMYYYALYTGPHRVPLVHGRAGYQMLPPGQRLDVDAMREAAACLLGEHDFSAFRAAECQAKSPVKTMYDVTIRDDGNWVFLRFRASAFLHHMVRNLMGCLVAVGRGRYPAHWLAQVLAGRERKLAAPTFMPDGLYLVGVKYPDPYQIPAADPSASLFHGVFDDAA.

D52 (nucleophile) is an active-site residue. Y110 is a binding site for substrate.

This sequence belongs to the tRNA pseudouridine synthase TruA family. Homodimer.

It catalyses the reaction uridine(38/39/40) in tRNA = pseudouridine(38/39/40) in tRNA. Formation of pseudouridine at positions 38, 39 and 40 in the anticodon stem and loop of transfer RNAs. The polypeptide is tRNA pseudouridine synthase A (Cupriavidus necator (strain ATCC 17699 / DSM 428 / KCTC 22496 / NCIMB 10442 / H16 / Stanier 337) (Ralstonia eutropha)).